Consider the following 82-residue polypeptide: UPF0291 protein LJ_1507 (82 aa).

The tract at residues 61 to 82 (DGKEVTSEKAKEAQRRKGLRKD) is disordered.

It belongs to the UPF0291 family.

The protein localises to the cytoplasm. This Lactobacillus johnsonii (strain CNCM I-12250 / La1 / NCC 533) protein is UPF0291 protein LJ_1507.